Consider the following 103-residue polypeptide: Pyrimidine/purine nucleoside phosphorylase (103 aa).

This sequence belongs to the nucleoside phosphorylase PpnP family.

The enzyme catalyses a purine D-ribonucleoside + phosphate = a purine nucleobase + alpha-D-ribose 1-phosphate. It catalyses the reaction adenosine + phosphate = alpha-D-ribose 1-phosphate + adenine. The catalysed reaction is cytidine + phosphate = cytosine + alpha-D-ribose 1-phosphate. It carries out the reaction guanosine + phosphate = alpha-D-ribose 1-phosphate + guanine. The enzyme catalyses inosine + phosphate = alpha-D-ribose 1-phosphate + hypoxanthine. It catalyses the reaction thymidine + phosphate = 2-deoxy-alpha-D-ribose 1-phosphate + thymine. The catalysed reaction is uridine + phosphate = alpha-D-ribose 1-phosphate + uracil. It carries out the reaction xanthosine + phosphate = alpha-D-ribose 1-phosphate + xanthine. In terms of biological role, catalyzes the phosphorolysis of diverse nucleosides, yielding D-ribose 1-phosphate and the respective free bases. Can use uridine, adenosine, guanosine, cytidine, thymidine, inosine and xanthosine as substrates. Also catalyzes the reverse reactions. This Dechloromonas aromatica (strain RCB) protein is Pyrimidine/purine nucleoside phosphorylase.